The chain runs to 428 residues: Serine--tRNA ligase (428 aa).

An L-serine-binding site is contributed by 231–233 (TAE). 262–264 (RAE) lines the ATP pocket. Glutamate 285 serves as a coordination point for L-serine. 349–352 (EISS) provides a ligand contact to ATP. An L-serine-binding site is contributed by serine 385.

This sequence belongs to the class-II aminoacyl-tRNA synthetase family. Type-1 seryl-tRNA synthetase subfamily. As to quaternary structure, homodimer. The tRNA molecule binds across the dimer.

Its subcellular location is the cytoplasm. The catalysed reaction is tRNA(Ser) + L-serine + ATP = L-seryl-tRNA(Ser) + AMP + diphosphate + H(+). It catalyses the reaction tRNA(Sec) + L-serine + ATP = L-seryl-tRNA(Sec) + AMP + diphosphate + H(+). The protein operates within aminoacyl-tRNA biosynthesis; selenocysteinyl-tRNA(Sec) biosynthesis; L-seryl-tRNA(Sec) from L-serine and tRNA(Sec): step 1/1. Functionally, catalyzes the attachment of serine to tRNA(Ser). Is also able to aminoacylate tRNA(Sec) with serine, to form the misacylated tRNA L-seryl-tRNA(Sec), which will be further converted into selenocysteinyl-tRNA(Sec). This is Serine--tRNA ligase from Methylorubrum extorquens (strain PA1) (Methylobacterium extorquens).